The sequence spans 215 residues: Probable Rab-related GTPase (215 aa).

Residue 20 to 27 participates in GTP binding; that stretch reads GSSGVGKS. The short motif at 42 to 50 is the Effector region element; that stretch reads VSPTIGAAF. Residues 69–73 and 127–130 each bind GTP; these read DTAGQ and NKID. 2 S-geranylgeranyl cysteine; by host lipidation sites follow: Cys-211 and Cys-212. Cys-212 is modified (cysteine methyl ester; by host). Residues 213 to 215 constitute a propeptide, removed in mature form; the sequence is YIS.

It belongs to the small GTPase superfamily. Rab family.

The protein localises to the host cell membrane. May be involved in protein transport. This Acanthamoeba polyphaga mimivirus (APMV) protein is Probable Rab-related GTPase.